Here is a 180-residue protein sequence, read N- to C-terminus: Peptidyl-tRNA hydrolase (180 aa).

Tyr15 provides a ligand contact to tRNA. Catalysis depends on His20, which acts as the Proton acceptor. Phe67, Asn69, and Asn115 together coordinate tRNA.

It belongs to the PTH family. In terms of assembly, monomer.

The protein localises to the cytoplasm. The catalysed reaction is an N-acyl-L-alpha-aminoacyl-tRNA + H2O = an N-acyl-L-amino acid + a tRNA + H(+). Hydrolyzes ribosome-free peptidyl-tRNAs (with 1 or more amino acids incorporated), which drop off the ribosome during protein synthesis, or as a result of ribosome stalling. Functionally, catalyzes the release of premature peptidyl moieties from peptidyl-tRNA molecules trapped in stalled 50S ribosomal subunits, and thus maintains levels of free tRNAs and 50S ribosomes. The protein is Peptidyl-tRNA hydrolase of Chlamydia pneumoniae (Chlamydophila pneumoniae).